The primary structure comprises 326 residues: Putative nickel insertion protein (326 aa).

It belongs to the LarC family.

This Enterococcus faecalis (strain ATCC 700802 / V583) protein is Putative nickel insertion protein.